The sequence spans 450 residues: Serine/threonine-protein kinase SSN3 (450 aa).

Positions 40–393 (YRIIGFISSG…AAQALQSPFF (354 aa)) constitute a Protein kinase domain. ATP is bound by residues 46–54 (ISSGTYGRV) and Lys-71. Asp-173 functions as the Proton acceptor in the catalytic mechanism. Disordered regions lie at residues 307–341 (ASSH…NLEK) and 418–450 (QDDN…RQKE). Residues 310 to 326 (HHNHHSHHHPHHHHGHY) are compositionally biased toward basic residues.

It belongs to the protein kinase superfamily. CMGC Ser/Thr protein kinase family. CDC2/CDKX subfamily. As to quaternary structure, component of the SRB8-11 complex, a regulatory module of the Mediator complex. Interacts with SSN8/FCC1. Mg(2+) serves as cofactor.

The protein localises to the nucleus. It carries out the reaction L-seryl-[protein] + ATP = O-phospho-L-seryl-[protein] + ADP + H(+). The catalysed reaction is L-threonyl-[protein] + ATP = O-phospho-L-threonyl-[protein] + ADP + H(+). The enzyme catalyses [DNA-directed RNA polymerase] + ATP = phospho-[DNA-directed RNA polymerase] + ADP + H(+). In terms of biological role, component of the SRB8-11 complex. The SRB8-11 complex is a regulatory module of the Mediator complex which is itself involved in regulation of basal and activated RNA polymerase II-dependent transcription. The SRB8-11 complex may be involved in the transcriptional repression of a subset of genes regulated by Mediator. It may inhibit the association of the Mediator complex with RNA polymerase II to form the holoenzyme complex. The SRB8-11 complex phosphorylates the C-terminal domain (CTD) of the largest subunit of RNA polymerase II. Required for normal growth and secondary metabolism. The polypeptide is Serine/threonine-protein kinase SSN3 (SSN3) (Gibberella moniliformis (Maize ear and stalk rot fungus)).